The following is a 213-amino-acid chain: Kiwellin (213 aa).

An N-terminal signal peptide occupies residues 1–24 (MAQLSLLVLSLFLTLISLPPPGAS). Intrachain disulfides connect cysteine 28–cysteine 60, cysteine 32–cysteine 44, and cysteine 38–cysteine 49. 2 positions are modified to 4-hydroxyproline: proline 65 and proline 67. 4 disulfides stabilise this stretch: cysteine 72–cysteine 90, cysteine 80–cysteine 172, cysteine 119–cysteine 144, and cysteine 166–cysteine 182. The disordered stretch occupies residues 91–121 (SPPVTSSTPAKLTNNDFSEGGDGGGPSECDE). A compositionally biased stretch (polar residues) spans 93–107 (PVTSSTPAKLTNNDF).

It belongs to the kiwellin family. Post-translationally, undergoes proteolytic cleavage by actinidin to produce kissper and KiTH. Three forms of KiTH are produced by cleavage at different sites.

It localises to the secreted. Its function is as follows. Kissper is an anion-selective pore-forming peptide. The sequence is that of Kiwellin from Actinidia chinensis var. chinensis (Chinese soft-hair kiwi).